We begin with the raw amino-acid sequence, 670 residues long: MSQIPSPNDPPPAGAVPTSGAPAGPSATPAPSPTAGFSLPEHRPAPTGKALAALAVGALGVVYGDIGTSPLYSLKECFGGPHGVHPTDANVLGVLSLVFWAMTFVVTFKYMSFVMRADNRGEGGILALMALVGKTETTRLGRRVLLMLGLFGAALLYGDGIITPAISVLGAVEGVAVAAPAMERVVVPATVVILVFLFLFQKQGTAKVGAVFGPIMLVWFATIAVLGVRGILHDPSILRALLPTHALSFFARNGWHGFLVLGGVVLVITGGEALYADMGHFGKRPIRVAWLGLAMPALLLNYLGQGALLLHDPGAARNPFYLLAPEWALYPTIAIATAAAIVASQALISGAYSLTQQAIQLGYSPRVTIRHTSQREIGQIYLPEVNWMLGTACVALVLGFQTSSRLASAYGIAVTGTMIVTTLLFHRVMRDRWGWARWKAWPLTVLFLTVDASFFLANVVKFRDGGWFPIAAAALVFTLMSTWKRGRDALALMLKDAGLPLDLFMADVARRKVQRVAGTAVFMTSNPGGVPPVLLHHLKHNKVLHERVILVSILAHEIPFVAEAERVNARELGSGFFQVIAHYGFMETPDVPALLDSLPRRALAGPRLTIVPMETTYFLGRETLLANGPSTIPTWRKRLFIVMARNAQTASAFFGLPPNRVVEMGAQIQL.

The segment at 1–42 (MSQIPSPNDPPPAGAVPTSGAPAGPSATPAPSPTAGFSLPEH) is disordered. The segment covering 15–35 (AVPTSGAPAGPSATPAPSPTA) has biased composition (low complexity). The next 12 helical transmembrane spans lie at 51–71 (LAAL…TSPL), 91–111 (VLGV…FKYM), 144–164 (VLLM…IITP), 180–200 (PAME…LFLF), 208–228 (VGAV…VLGV), 254–274 (GWHG…GEAL), 290–310 (WLGL…ALLL), 322–342 (LLAP…AAIV), 380–400 (IYLP…VLGF), 406–426 (LASA…LLFH), 440–460 (AWPL…ANVV), and 464–484 (DGGW…STWK).

This sequence belongs to the HAK/KUP transporter (TC 2.A.72) family.

It is found in the cell inner membrane. It carries out the reaction K(+)(in) + H(+)(in) = K(+)(out) + H(+)(out). In terms of biological role, transport of potassium into the cell. Likely operates as a K(+):H(+) symporter. The protein is Probable potassium transport system protein Kup of Anaeromyxobacter dehalogenans (strain 2CP-C).